Consider the following 295-residue polypeptide: Cyclic dipyrimidine nucleotide synthase CdnE (295 aa).

Residues 1–28 (MAKYTEDQLTSWTKPPSDSEQTKLENSE) form a disordered region. Residues 7–19 (DQLTSWTKPPSDS) show a composition bias toward polar residues. UTP is bound by residues Gln-51 and Ser-53. Asp-67 is a Mg(2+) binding site. Lys-123, Asn-169, Arg-197, Phe-217, and Lys-276 together coordinate UTP. The Pyrimidine specificity motif (R/Q)xW in donor pocket signature appears at 275–277 (RKW).

This sequence belongs to the CD-NTase family. E02 subfamily. As to quaternary structure, monomer. Requires Mg(2+) as cofactor.

It carries out the reaction 2 UTP = c-di-UMP + 2 diphosphate. It catalyses the reaction UTP + CTP = cyclic CMP-UMP + 2 diphosphate. Its function is as follows. Cyclic nucleotide synthase (second messenger synthase) of a CBASS antivirus system. CBASS (cyclic oligonucleotide-based antiphage signaling system) provides immunity against bacteriophage. The CD-NTase protein synthesizes cyclic nucleotides in response to infection; these serve as specific second messenger signals. The signals activate a diverse range of effectors, leading to bacterial cell death and thus abortive phage infection. A type I-B(UU) CBASS system. The sequence is that of Cyclic dipyrimidine nucleotide synthase CdnE from Cecembia lonarensis (strain CCUG 58316 / KCTC 22772 / LW9).